The primary structure comprises 122 residues: Movement protein TGB2 (122 aa).

At 1–12 (MVKSTVPTRPNK) the chain is on the cytoplasmic side. A helical transmembrane segment spans residues 13–33 (YWPGVVAIGLVSLFIFLSVSN). Over 34-76 (QKHSTTSGDNIHKFSNGGTYRDGSKCITYNRNSPLAYNGSSSN) the chain is Lumenal. A helical transmembrane segment spans residues 77-97 (NTLFWLCLLGLSMVWIAYCGY). Residues 98 to 122 (KSLSGQWHSCQHDKNERNFLFECFE) lie on the Cytoplasmic side of the membrane.

It belongs to the virgaviridae/benyvirus TGB2 movement protein family. As to quaternary structure, interacts with movement protein TGB3. TGB1-TGB3-TGB2 complex formation is enhanced by ATP hydrolysis.

It localises to the host cell junction. The protein resides in the host plasmodesma. The protein localises to the host endoplasmic reticulum membrane. It is found in the host cytoplasm. Its subcellular location is the host cytoskeleton. Its function is as follows. Participates in the transport of viral genome to neighboring plant cells directly through plasmodesmata, without any budding. TGBp2 and TGBp3 are necessary for intracellular delivery of TGBp1-containing vRNPs to plasmodesmata. Can gate plasmodesmata and increase their size exclusion limit. To a lesser extent than TGB3, induces host actin cytoskeleton network thickening, which probably plays a major role in virus cell-to-cell movement. This is Movement protein TGB2 from Peanut clump virus (isolate 87/TGTA2) (PCV).